A 244-amino-acid chain; its full sequence is Sugar fermentation stimulation protein homolog (244 aa).

Belongs to the SfsA family.

The sequence is that of Sugar fermentation stimulation protein homolog from Dinoroseobacter shibae (strain DSM 16493 / NCIMB 14021 / DFL 12).